The sequence spans 426 residues: C4-dicarboxylate transport protein (426 aa).

A run of 8 helical transmembrane segments spans residues 8–28 (VLYV…HFYP), 44–64 (LIKM…IAGM), 78–98 (LLYF…ATHV), 148–168 (GEIL…ATAG), 173–193 (VVTG…RIIT), 222–242 (LIGT…GIIA), 297–317 (GYSF…LFIA), and 355–375 (AATL…ILGI).

The protein belongs to the dicarboxylate/amino acid:cation symporter (DAACS) (TC 2.A.23) family.

It is found in the cell inner membrane. Responsible for the transport of dicarboxylates such as succinate, fumarate, and malate from the periplasm across the membrane. This is C4-dicarboxylate transport protein from Paraburkholderia xenovorans (strain LB400).